Reading from the N-terminus, the 228-residue chain is Cytochrome c oxidase subunit 2 (228 aa).

Over 1 to 14 (MAYPLQLGLQDASS) the chain is Mitochondrial intermembrane. Residues 15–45 (PIMEELTNFHDHTLMIVFLISSLVLYLISLM) form a helical membrane-spanning segment. Residues 46–59 (LTTKLIHTSTMDAQ) are Mitochondrial matrix-facing. Residues 60–87 (EVETIWTILPAIILILIALPSLRILYMM) form a helical membrane-spanning segment. Residues 88–228 (DEINNPVLTV…FENWSVSMTQ (141 aa)) lie on the Mitochondrial intermembrane side of the membrane. Residues His-161, Cys-196, Glu-198, Cys-200, His-204, and Met-207 each coordinate Cu cation. Residue Glu-198 coordinates Mg(2+).

The protein belongs to the cytochrome c oxidase subunit 2 family. As to quaternary structure, component of the cytochrome c oxidase (complex IV, CIV), a multisubunit enzyme composed of 14 subunits. The complex is composed of a catalytic core of 3 subunits MT-CO1, MT-CO2 and MT-CO3, encoded in the mitochondrial DNA, and 11 supernumerary subunits COX4I, COX5A, COX5B, COX6A, COX6B, COX6C, COX7A, COX7B, COX7C, COX8 and NDUFA4, which are encoded in the nuclear genome. The complex exists as a monomer or a dimer and forms supercomplexes (SCs) in the inner mitochondrial membrane with NADH-ubiquinone oxidoreductase (complex I, CI) and ubiquinol-cytochrome c oxidoreductase (cytochrome b-c1 complex, complex III, CIII), resulting in different assemblies (supercomplex SCI(1)III(2)IV(1) and megacomplex MCI(2)III(2)IV(2)). Found in a complex with TMEM177, COA6, COX18, COX20, SCO1 and SCO2. Interacts with TMEM177 in a COX20-dependent manner. Interacts with COX20. Interacts with COX16. Cu cation is required as a cofactor.

The protein localises to the mitochondrion inner membrane. It catalyses the reaction 4 Fe(II)-[cytochrome c] + O2 + 8 H(+)(in) = 4 Fe(III)-[cytochrome c] + 2 H2O + 4 H(+)(out). Its function is as follows. Component of the cytochrome c oxidase, the last enzyme in the mitochondrial electron transport chain which drives oxidative phosphorylation. The respiratory chain contains 3 multisubunit complexes succinate dehydrogenase (complex II, CII), ubiquinol-cytochrome c oxidoreductase (cytochrome b-c1 complex, complex III, CIII) and cytochrome c oxidase (complex IV, CIV), that cooperate to transfer electrons derived from NADH and succinate to molecular oxygen, creating an electrochemical gradient over the inner membrane that drives transmembrane transport and the ATP synthase. Cytochrome c oxidase is the component of the respiratory chain that catalyzes the reduction of oxygen to water. Electrons originating from reduced cytochrome c in the intermembrane space (IMS) are transferred via the dinuclear copper A center (CU(A)) of subunit 2 and heme A of subunit 1 to the active site in subunit 1, a binuclear center (BNC) formed by heme A3 and copper B (CU(B)). The BNC reduces molecular oxygen to 2 water molecules using 4 electrons from cytochrome c in the IMS and 4 protons from the mitochondrial matrix. This chain is Cytochrome c oxidase subunit 2 (MT-CO2), found in Meriones shawi (Shaw's jird).